Reading from the N-terminus, the 72-residue chain is Disintegrin batroxostatin (72 aa).

The region spanning 1 to 72 is the Disintegrin domain; the sequence is EAGEECDCGA…SADCPRNRFY (72 aa). 6 disulfide bridges follow: Cys-6–Cys-21, Cys-8–Cys-16, Cys-15–Cys-38, Cys-29–Cys-35, Cys-34–Cys-59, and Cys-47–Cys-66. Positions 51–53 match the Cell attachment site motif; sequence RGD. The segment at 52-72 is disordered; that stretch reads GDNPDDRCTGQSADCPRNRFY.

This sequence belongs to the venom metalloproteinase (M12B) family. P-II subfamily. P-IIa sub-subfamily. In terms of assembly, monomer. In terms of tissue distribution, expressed by the venom gland.

The protein resides in the secreted. Inhibits fibrinogen interaction with platelets. Acts by binding to the glycoprotein IIb-IIIa receptor (ITGA2B/ITGB3) on the platelet surface and inhibits aggregation induced by ADP, thrombin, platelet-activating factor and collagen. Also inhibits T24 and SK-Mel-28 cell adhesion to fibronectin with IC(50) of 4.4 uM and 33 nM, respectively. The chain is Disintegrin batroxostatin from Bothrops atrox (Barba amarilla).